Consider the following 315-residue polypeptide: D-erythronate dehydrogenase (315 aa).

NAD(+) contacts are provided by S119, Y143, and K147. The Proton acceptor role is filled by Y143.

Belongs to the NAD(P)-dependent epimerase/dehydratase family.

It catalyses the reaction D-erythronate + NAD(+) = 2-dehydro-D-erythronate + NADH + H(+). Functionally, catalyzes oxidation of D-erythronate to 2-oxo-tetronate. Can use either NAD(+) or NADP(+) as cosubstrate, with a preference for NAD(+). This Haemophilus influenzae (strain ATCC 51907 / DSM 11121 / KW20 / Rd) protein is D-erythronate dehydrogenase.